A 734-amino-acid polypeptide reads, in one-letter code: Casein kinase II subunit alpha'-interacting protein (734 aa).

Positions 608-654 (SLLPSTSSSTSSSSTTSSSSSVASASSDSSSSSSSSSSFSISSSSSP) are disordered. Over residues 612–654 (STSSSTSSSSTTSSSSSVASASSDSSSSSSSSSSFSISSSSSP) the composition is skewed to low complexity.

As to quaternary structure, interacts (via C-terminus) with CSNK2A2. Phosphorylated by CK2 (casein kinase II), specifically by complexes containing catalytic subunit CSNK2A2.

The protein localises to the nucleus. Its function is as follows. May play a role in chromatin regulation of male germ cells. In Homo sapiens (Human), this protein is Casein kinase II subunit alpha'-interacting protein.